We begin with the raw amino-acid sequence, 198 residues long: Superoxide dismutase [Mn], mitochondrial (198 aa).

Residue histidine 26 coordinates Mn(2+). Tyrosine 34 carries the post-translational modification 3'-nitrotyrosine. An N6-acetyllysine; alternate mark is found at lysine 44 and lysine 51. An N6-succinyllysine; alternate mark is found at lysine 44 and lysine 51. Histidine 74 is a binding site for Mn(2+). Lysine 90 is modified (N6-acetyllysine). N6-acetyllysine; alternate occurs at positions 98 and 106. An N6-succinyllysine; alternate mark is found at lysine 98 and lysine 106. Positions 159 and 163 each coordinate Mn(2+). Lysine 178 bears the N6-acetyllysine mark.

The protein belongs to the iron/manganese superoxide dismutase family. In terms of assembly, homotetramer. The cofactor is Mn(2+). Post-translationally, nitrated under oxidative stress. Nitration coupled with oxidation inhibits the catalytic activity. Acetylation at Lys-98 decreases enzymatic activity. Deacetylated by SIRT3 upon exposure to ionizing radiations or after long fasting. In terms of processing, polyubiquitinated; leading to proteasomal degradation. Deubiquitinated by USP36 which increases protein stability.

It is found in the mitochondrion matrix. It catalyses the reaction 2 superoxide + 2 H(+) = H2O2 + O2. Functionally, destroys superoxide anion radicals which are normally produced within the cells and which are toxic to biological systems. This Hylobates lar (Lar gibbon) protein is Superoxide dismutase [Mn], mitochondrial (SOD2).